The sequence spans 692 residues: Elongation factor G (692 aa).

One can recognise a tr-type G domain in the interval 8 to 283 (NRIRNIGIAA…AVIDYLPAPT (276 aa)). Residues 17–24 (AHIDAGKT), 81–85 (DTPGH), and 135–138 (NKMD) each bind GTP.

The protein belongs to the TRAFAC class translation factor GTPase superfamily. Classic translation factor GTPase family. EF-G/EF-2 subfamily.

It is found in the cytoplasm. Its function is as follows. Catalyzes the GTP-dependent ribosomal translocation step during translation elongation. During this step, the ribosome changes from the pre-translocational (PRE) to the post-translocational (POST) state as the newly formed A-site-bound peptidyl-tRNA and P-site-bound deacylated tRNA move to the P and E sites, respectively. Catalyzes the coordinated movement of the two tRNA molecules, the mRNA and conformational changes in the ribosome. This Helicobacter pylori (strain J99 / ATCC 700824) (Campylobacter pylori J99) protein is Elongation factor G (fusA).